Reading from the N-terminus, the 193-residue chain is Imidazoleglycerol-phosphate dehydratase (193 aa).

It belongs to the imidazoleglycerol-phosphate dehydratase family.

The protein localises to the cytoplasm. It catalyses the reaction D-erythro-1-(imidazol-4-yl)glycerol 3-phosphate = 3-(imidazol-4-yl)-2-oxopropyl phosphate + H2O. Its pathway is amino-acid biosynthesis; L-histidine biosynthesis; L-histidine from 5-phospho-alpha-D-ribose 1-diphosphate: step 6/9. This Saccharolobus solfataricus (strain ATCC 35092 / DSM 1617 / JCM 11322 / P2) (Sulfolobus solfataricus) protein is Imidazoleglycerol-phosphate dehydratase (hisB).